Reading from the N-terminus, the 302-residue chain is Sulfate adenylyltransferase subunit 2 (302 aa).

Belongs to the PAPS reductase family. CysD subfamily. As to quaternary structure, heterodimer composed of CysD, the smaller subunit, and CysN.

It catalyses the reaction sulfate + ATP + H(+) = adenosine 5'-phosphosulfate + diphosphate. It participates in sulfur metabolism; hydrogen sulfide biosynthesis; sulfite from sulfate: step 1/3. Functionally, with CysN forms the ATP sulfurylase (ATPS) that catalyzes the adenylation of sulfate producing adenosine 5'-phosphosulfate (APS) and diphosphate, the first enzymatic step in sulfur assimilation pathway. APS synthesis involves the formation of a high-energy phosphoric-sulfuric acid anhydride bond driven by GTP hydrolysis by CysN coupled to ATP hydrolysis by CysD. This is Sulfate adenylyltransferase subunit 2 from Proteus mirabilis (strain HI4320).